Reading from the N-terminus, the 108-residue chain is Nucleoid-associated protein BMASAVP1_A1850 (108 aa).

The segment at 84-108 is disordered; that stretch reads EATSQEKMSGMTSGLPLPPGFKLPF. Polar residues predominate over residues 85-95; that stretch reads ATSQEKMSGMT. A compositionally biased stretch (pro residues) spans 99 to 108; sequence PLPPGFKLPF.

The protein belongs to the YbaB/EbfC family. As to quaternary structure, homodimer.

It is found in the cytoplasm. The protein localises to the nucleoid. Its function is as follows. Binds to DNA and alters its conformation. May be involved in regulation of gene expression, nucleoid organization and DNA protection. The protein is Nucleoid-associated protein BMASAVP1_A1850 of Burkholderia mallei (strain SAVP1).